The sequence spans 490 residues: Betaine aldehyde dehydrogenase (490 aa).

The K(+) site is built by Thr-26, Ile-27, and Asp-93. 150–152 is an NAD(+) binding site; it reads GAW. The active-site Charge relay system is the Lys-162. 176–179 lines the NAD(+) pocket; it reads KPSE. Val-180 serves as a coordination point for K(+). Residue 230–233 coordinates NAD(+); the sequence is GVAS. Leu-246 contacts K(+). Glu-252 acts as the Proton acceptor in catalysis. Residues Gly-254, Cys-286, and Glu-387 each coordinate NAD(+). Cys-286 (nucleophile) is an active-site residue. A Cysteine sulfenic acid (-SOH) modification is found at Cys-286. K(+) contacts are provided by Lys-457 and Gly-460. Glu-464 acts as the Charge relay system in catalysis.

The protein belongs to the aldehyde dehydrogenase family. As to quaternary structure, dimer of dimers. K(+) is required as a cofactor.

The enzyme catalyses betaine aldehyde + NAD(+) + H2O = glycine betaine + NADH + 2 H(+). It functions in the pathway amine and polyamine biosynthesis; betaine biosynthesis via choline pathway; betaine from betaine aldehyde: step 1/1. Involved in the biosynthesis of the osmoprotectant glycine betaine. Catalyzes the irreversible oxidation of betaine aldehyde to the corresponding acid. This is Betaine aldehyde dehydrogenase from Escherichia coli (strain SE11).